The primary structure comprises 370 residues: tRNA-specific 2-thiouridylase MnmA (370 aa).

Residues Gly-9–Ser-16 and Met-35 each bind ATP. The segment at Asn-95–Asp-97 is interaction with target base in tRNA. The active-site Nucleophile is the Cys-100. Cys-100 and Cys-198 are disulfide-bonded. Residue Gly-124 coordinates ATP. Residues Lys-148 to Gln-150 form an interaction with tRNA region. Catalysis depends on Cys-198, which acts as the Cysteine persulfide intermediate. An interaction with tRNA region spans residues Arg-316–Tyr-317.

It belongs to the MnmA/TRMU family.

The protein resides in the cytoplasm. It carries out the reaction S-sulfanyl-L-cysteinyl-[protein] + uridine(34) in tRNA + AH2 + ATP = 2-thiouridine(34) in tRNA + L-cysteinyl-[protein] + A + AMP + diphosphate + H(+). Functionally, catalyzes the 2-thiolation of uridine at the wobble position (U34) of tRNA, leading to the formation of s(2)U34. This chain is tRNA-specific 2-thiouridylase MnmA, found in Acidovorax ebreus (strain TPSY) (Diaphorobacter sp. (strain TPSY)).